Reading from the N-terminus, the 1366-residue chain is Collagen alpha-2(I) chain (1366 aa).

Positions 1-22 (MLSFVDTRTLLLLAVTLCLATC) are cleaved as a signal peptide. Residue glutamine 23 is modified to Pyrrolidone carboxylic acid. Positions 23 to 79 (QSLQEETVRKGPAGDRGPRGERGPPGPPGRDGEDGPTGPPGPPGPPGPPGLGGNFAA) are cleaved as a propeptide — N-terminal propeptide. The segment covering 28-44 (ETVRKGPAGDRGPRGER) has biased composition (basic and acidic residues). Residues 28–1130 (ETVRKGPAGD…QPRSAPSLRP (1103 aa)) form a disordered region. A 4-hydroxyproline mark is found at proline 47, proline 50, proline 62, proline 65, proline 68, and proline 71. Pro residues predominate over residues 59–71 (TGPPGPPGPPGPP). Glutamine 80 bears the Pyrrolidone carboxylic acid mark. Lysine 84 bears the Allysine mark. Over residues 84–94 (KGVGLGPGPMG) the composition is skewed to gly residues. Positions 95–140 (LMGPRGPPGAAGAPGPQGFQGPAGEPGEPGQTGPAGARGPAGPPGK) are enriched in low complexity. Residues proline 102 and proline 108 each carry the 4-hydroxyproline modification. A compositionally biased stretch (basic and acidic residues) spans 141 to 155 (AGEDGHPGKPGRPGE). Lysine 177 carries the 5-hydroxylysine; alternate modification. An O-linked (Gal...) hydroxylysine; alternate glycan is attached at lysine 177. Low complexity-rich tracts occupy residues 225–254 (VGAP…SAGP), 269–293 (AVGN…LSGP), 300–321 (PGAN…AGAP), 330–345 (PGPV…RGLV), 398–410 (LRGS…LPGA), and 419–434 (PPGS…VRGP). 4-hydroxyproline is present on residues proline 420, proline 441, and proline 444. 2 stretches are compositionally biased toward low complexity: residues 470–489 (LPGI…RGEP) and 513–531 (AGLA…NGAQ). Residues 538-547 (GVQGGKGEQG) are compositionally biased toward gly residues. 4 stretches are compositionally biased toward low complexity: residues 594 to 611 (PGES…SRGP), 623 to 648 (EPGV…RGAA), 663 to 710 (RGEI…PRGS), and 717 to 737 (VGPA…QPGA). Positions 738–747 (KGERGAKGPK) are enriched in basic and acidic residues. Positions 752 to 765 (VVGPTGPVGAAGPA) are enriched in low complexity. The span at 775-784 (GSRGDGGPPG) shows a compositional bias: gly residues. Low complexity-rich tracts occupy residues 786–795 (TGFPGAAGRT), 849–876 (SGEA…LGLP), 884–932 (LPGV…NPGN), 956–974 (PVGA…PAGK), and 983–1001 (PSGP…PSGP). Basic and acidic residues predominate over residues 1005–1016 (RGDKGEPGEKGP). Pro residues predominate over residues 1089 to 1101 (AGPPGPPGPPGPP). A propeptide spans 1120 to 1366 (DQPRSAPSLR…FVDIGPVCFK (247 aa)) (C-terminal propeptide). The Fibrillar collagen NC1 domain maps to 1133-1366 (YEVDATLKSL…FVDIGPVCFK (234 aa)). Cystine bridges form between cysteine 1163/cysteine 1195, cysteine 1203/cysteine 1364, and cysteine 1272/cysteine 1317. The Ca(2+) site is built by aspartate 1181, asparagine 1183, glutamine 1184, cysteine 1186, and aspartate 1189. Residue asparagine 1267 is glycosylated (N-linked (GlcNAc...) asparagine).

Belongs to the fibrillar collagen family. As to quaternary structure, trimers of one alpha 2(I) and two alpha 1(I) chains. Interacts (via C-terminus) with TMEM131 (via PapD-L domain); the interaction is direct and is involved in assembly and TRAPPIII ER-to-Golgi transport complex-dependent secretion of collagen. In terms of processing, prolines at the third position of the tripeptide repeating unit (G-X-Y) are hydroxylated in some or all of the chains. In terms of tissue distribution, forms the fibrils of tendon, ligaments and bones. In bones the fibrils are mineralized with calcium hydroxyapatite.

It localises to the secreted. Its subcellular location is the extracellular space. The protein resides in the extracellular matrix. In terms of biological role, type I collagen is a member of group I collagen (fibrillar forming collagen). The chain is Collagen alpha-2(I) chain (COL1A2) from Homo sapiens (Human).